The primary structure comprises 192 residues: Peptidyl-tRNA hydrolase (192 aa).

Residue Tyr-18 coordinates tRNA. His-23 serves as the catalytic Proton acceptor. Residues Phe-69, Asn-71, and Asn-117 each coordinate tRNA.

Belongs to the PTH family. In terms of assembly, monomer.

The protein localises to the cytoplasm. It carries out the reaction an N-acyl-L-alpha-aminoacyl-tRNA + H2O = an N-acyl-L-amino acid + a tRNA + H(+). Hydrolyzes ribosome-free peptidyl-tRNAs (with 1 or more amino acids incorporated), which drop off the ribosome during protein synthesis, or as a result of ribosome stalling. Its function is as follows. Catalyzes the release of premature peptidyl moieties from peptidyl-tRNA molecules trapped in stalled 50S ribosomal subunits, and thus maintains levels of free tRNAs and 50S ribosomes. The protein is Peptidyl-tRNA hydrolase of Neisseria meningitidis serogroup B (strain ATCC BAA-335 / MC58).